Reading from the N-terminus, the 142-residue chain is Secreted RxLR effector protein 161 (142 aa).

The signal sequence occupies residues 1–27 (MKNVPYLSAVGAIMYLMVVTRPDLAAA). The RxLR signature appears at 48–51 (RVLR).

This sequence belongs to the RxLR effector family.

It is found in the secreted. Its subcellular location is the host chloroplast envelope. The protein localises to the host nucleus. Functionally, secreted effector that completely suppresses the host cell death induced by cell death-inducing proteins. This is Secreted RxLR effector protein 161 from Plasmopara viticola (Downy mildew of grapevine).